The following is a 623-amino-acid chain: Flap endonuclease 1 (623 aa).

Residues 1 to 106 (MGIKGLTKFI…SELEKRGEKR (106 aa)) form an N-domain region. D34 contributes to the Mg(2+) binding site. R47 and R72 together coordinate DNA. The Mg(2+) site is built by D88, E160, E162, D181, and D183. The I-domain stretch occupies residues 124-267 (EIKKQSGRTV…KTAYNLIKEY (144 aa)). E160 contributes to the DNA binding site. G245 and D247 together coordinate DNA. Position 247 (D247) interacts with Mg(2+). An interaction with PCNA region spans residues 350–358 (TQRRLDNFF). The interval 368 to 517 (LVIEESQSQS…LSSNSTLHSC (150 aa)) is disordered. Composition is skewed to basic and acidic residues over residues 410-424 (TKVEKEPKREKKDEE) and 466-482 (QKSDSESGNVKKEKTEQ). Residues 502-517 (AGSNTHLSSNSTLHSC) show a composition bias toward polar residues.

Belongs to the XPG/RAD2 endonuclease family. FEN1 subfamily. In terms of assembly, interacts with PCNA. Three molecules of FEN1 bind to one PCNA trimer with each molecule binding to one PCNA monomer. PCNA stimulates the nuclease activity without altering cleavage specificity. It depends on Mg(2+) as a cofactor. Post-translationally, phosphorylated. Phosphorylation upon DNA damage induces relocalization to the nuclear plasma.

The protein localises to the nucleus. Its subcellular location is the nucleolus. It is found in the nucleoplasm. The protein resides in the mitochondrion. Functionally, structure-specific nuclease with 5'-flap endonuclease and 5'-3' exonuclease activities involved in DNA replication and repair. During DNA replication, cleaves the 5'-overhanging flap structure that is generated by displacement synthesis when DNA polymerase encounters the 5'-end of a downstream Okazaki fragment. It enters the flap from the 5'-end and then tracks to cleave the flap base, leaving a nick for ligation. Also involved in the long patch base excision repair (LP-BER) pathway, by cleaving within the apurinic/apyrimidinic (AP) site-terminated flap. Acts as a genome stabilization factor that prevents flaps from equilibrating into structures that lead to duplications and deletions. Also possesses 5'-3' exonuclease activity on nicked or gapped double-stranded DNA, and exhibits RNase H activity. Also involved in replication and repair of rDNA and in repairing mitochondrial DNA. This chain is Flap endonuclease 1, found in Plasmodium vivax (strain Salvador I).